The sequence spans 180 residues: UPF0149 protein XOO1028 (180 aa).

The protein belongs to the UPF0149 family.

The polypeptide is UPF0149 protein XOO1028 (Xanthomonas oryzae pv. oryzae (strain MAFF 311018)).